A 504-amino-acid polypeptide reads, in one-letter code: MEAQVPLSTDILVIGGGPAGSYAAAVLAREGFKVVLLEKDVFPRYHIGESMLPSCRPFLRFIDFEEKMKNYGFFPKPGAALKLNQDKREGYTDFTANGPDNAAWNVVRSEFDDLLLRHAAELGVHVYEGVQVEKIHFSPDESTRPVSLAWSKGDGTQGDVSFNWLVDASGRNGIMSTRYLKNRTFNKSLKNVAVWGYWTGAGRYAPGTKRENAPWFEALTDETGWAWFIPLHNGATSVGVVLAEDESKRKKAQHRAESNGKSLSEVQHDCYMADLQRAPGLIQLLGSEAKFEGKLMSAGDYSYHASEYAGSHFRIAGDAGAFIDPFFSSGIHLALTGGLSAASTIAASIRGNCTEEEACAFHSSKVETAYTRFLFVVLGIYKQIRAQETAVLYEAEEDNFDRAIDSLRPVIQGCADADENLTEAELQSTLDFCRSVLAPNQQQNNLRTPVDTGAADVKAKHAPSETDAQNPLQSMDDCKRNFGTEVINGFYVKMEQGMLGLVCA.

Gly16, Ala19, Glu49, and Ala149 together coordinate FAD. Positions 329 and 330 each coordinate chloride. FAD is bound at residue Ile331. Positions 444–475 (NNLRTPVDTGAADVKAKHAPSETDAQNPLQSM) are disordered.

It belongs to the flavin-dependent halogenase family.

The catalysed reaction is melleolide F + FADH2 + chloride + O2 = 6'-chloromelleolide F + FAD + 2 H2O + H(+). Flavin-dependent halogenase involved in the biosynthesis of melleolides, a range of antifungal and phytotoxic polyketide derivatives composed of an orsellinic acid (OA) moiety esterified to various sesquiterpene alcohols. The halogenase catalyzes the transfer of a single chlorine atom to the melleolide backbone, resulting in a 6'-chloromelleolide product. The enzyme acts on free substrate and does not depend on carrier-protein-dependent acceptor molecules. The sequence is that of Flavin-dependent halogenase armH3 from Armillaria mellea (Honey mushroom).